The primary structure comprises 69 residues: Small, acid-soluble spore protein C4 (69 aa).

The protein belongs to the alpha/beta-type SASP family.

SASP are bound to spore DNA. They are double-stranded DNA-binding proteins that cause DNA to change to an a-like conformation. They protect the DNA backbone from chemical and enzymatic cleavage and are thus involved in dormant spore's high resistance to UV light. The protein is Small, acid-soluble spore protein C4 (SASP-C4) of Priestia megaterium (Bacillus megaterium).